We begin with the raw amino-acid sequence, 471 residues long: MPPKKNGKKNRDQAIKTGGMEETEQKNAEELTESDKKFYQAQIRDLEERLERYQLKCDELEVQEKDLSSKINNVEKEKKDIVLFLKRTLAKKEDKLNDLAETLSRHQQAQEAERESFESQLSLLRRELQENKEKYTSENMTLAGKLASLEEFSTQRETLIAERRSLEEQLRKQKEDHQAEIYNLEKKAVLDNDRLKKEMLQHVATVAAEFRRVSDEKMPETTLRAMQENLSVTAQLQQLSEKTKELLKENDALRARERQLKRENGITEPLLHEITKKSVANQKVVLQLTEKCKQMQSEVEKCTKLKQDHQELLDIHSAVCTEIEDLRKKHAAVTEDLNQTKAEVERQKKELEEESRMRAQINTVLEEAAVALKEALRDVPEEEDSELKVTVRRSQMMQKLLAVLDGAAALGKGPALTDLMTCRPGALQKTSPHLSHYKTGDLGLVPRKTHSTSTKMGNLSRSAYTSLQKKA.

The interval 1–33 (MPPKKNGKKNRDQAIKTGGMEETEQKNAEELTE) is disordered. Positions 23–33 (TEQKNAEELTE) are enriched in basic and acidic residues. Coiled coils occupy residues 27–190 (NAEE…KAVL) and 225–369 (AMQE…EEAA). A disordered region spans residues 447 to 471 (RKTHSTSTKMGNLSRSAYTSLQKKA). Residues 451–471 (STSTKMGNLSRSAYTSLQKKA) are compositionally biased toward polar residues.

It belongs to the CFAP157 family.

The protein resides in the cytoplasm. Its subcellular location is the cytoskeleton. It localises to the cilium basal body. Functionally, specifically required during spermatogenesis for flagellum morphogenesis and sperm motility. The chain is Cilia- and flagella-associated protein 157 (cfap157) from Danio rerio (Zebrafish).